The primary structure comprises 145 residues: Deoxyuridine 5'-triphosphate nucleotidohydrolase (145 aa).

Substrate contacts are provided by residues 65–67 (RSG), N78, and 82–84 (TID).

Belongs to the dUTPase family. Mg(2+) serves as cofactor.

The catalysed reaction is dUTP + H2O = dUMP + diphosphate + H(+). Its pathway is pyrimidine metabolism; dUMP biosynthesis; dUMP from dCTP (dUTP route): step 2/2. This enzyme is involved in nucleotide metabolism: it produces dUMP, the immediate precursor of thymidine nucleotides and it decreases the intracellular concentration of dUTP so that uracil cannot be incorporated into DNA. In Clostridium tetani (strain Massachusetts / E88), this protein is Deoxyuridine 5'-triphosphate nucleotidohydrolase.